A 206-amino-acid chain; its full sequence is Large ribosomal subunit protein uL22m (206 aa).

The transit peptide at 1–40 directs the protein to the mitochondrion; it reads MAAALLRELGALRVPNLRIWATQTLRVLPPSCIHTSASLD.

Belongs to the universal ribosomal protein uL22 family. In terms of assembly, component of the mitochondrial ribosome large subunit (39S) which comprises a 16S rRNA and about 50 distinct proteins.

Its subcellular location is the mitochondrion. The chain is Large ribosomal subunit protein uL22m (Mrpl22) from Mus musculus (Mouse).